The following is a 153-amino-acid chain: Putative nuclear shuttle protein (153 aa).

The protein belongs to the nanoviridae nuclear shuttle protein family.

It localises to the host nucleus. The protein resides in the host cytoplasm. In terms of biological role, putative nuclear shuttle protein. This Trifolium subterraneum (Subterranean clover) protein is Putative nuclear shuttle protein (DNA-N).